The following is a 647-amino-acid chain: Paraneoplastic antigen Ma6E (647 aa).

Disordered stretches follow at residues 111-199 (QPQG…AGGA), 227-254 (GAAGEAGGAGEAGAAGEAGGAGEGRAAG), 508-580 (AAAP…VPWG), and 608-647 (RGQEARKPPLEGLQTILEEPENEDEDGAGDEGQPKSSQGK). Composition is skewed to gly residues over residues 122–149 (GEGGGAGEAGGVGEVGAAGEAGGTGEAG), 158–199 (GEAG…AGGA), and 227–251 (GAAGEAGGAGEAGAAGEAGGAGEGR). A compositionally biased stretch (low complexity) spans 517–570 (PAAAQASPAQGNASEAGPGAEDAAEAASATKEAARGAPAAGEGESAPAGPEGLG). The span at 625-636 (EEPENEDEDGAG) shows a compositional bias: acidic residues.

The chain is Paraneoplastic antigen Ma6E from Homo sapiens (Human).